Consider the following 626-residue polypeptide: Chaperone protein HtpG (626 aa).

The tract at residues 1–329 is a; substrate-binding; it reads MSEETLSFQA…SSDLPLNVSR (329 aa). The interval 330–549 is b; it reads EMLQDDPRLR…EGAMSLHLQK (220 aa). Positions 550-626 are c; that stretch reads LLRQANQGSE…LTEVMGKGLI (77 aa).

This sequence belongs to the heat shock protein 90 family. In terms of assembly, homodimer.

The protein localises to the cytoplasm. Molecular chaperone. Has ATPase activity. This is Chaperone protein HtpG from Rhodospirillum rubrum (strain ATCC 11170 / ATH 1.1.1 / DSM 467 / LMG 4362 / NCIMB 8255 / S1).